The sequence spans 101 residues: Small ribosomal subunit protein uS14 (101 aa).

This sequence belongs to the universal ribosomal protein uS14 family. Part of the 30S ribosomal subunit. Contacts proteins S3 and S10.

Functionally, binds 16S rRNA, required for the assembly of 30S particles and may also be responsible for determining the conformation of the 16S rRNA at the A site. This is Small ribosomal subunit protein uS14 from Shewanella sp. (strain MR-4).